The chain runs to 246 residues: 1-(5-phosphoribosyl)-5-[(5-phosphoribosylamino)methylideneamino] imidazole-4-carboxamide isomerase (246 aa).

The active-site Proton acceptor is the D8. Residue D131 is the Proton donor of the active site.

It belongs to the HisA/HisF family.

The protein localises to the cytoplasm. The catalysed reaction is 1-(5-phospho-beta-D-ribosyl)-5-[(5-phospho-beta-D-ribosylamino)methylideneamino]imidazole-4-carboxamide = 5-[(5-phospho-1-deoxy-D-ribulos-1-ylimino)methylamino]-1-(5-phospho-beta-D-ribosyl)imidazole-4-carboxamide. It participates in amino-acid biosynthesis; L-histidine biosynthesis; L-histidine from 5-phospho-alpha-D-ribose 1-diphosphate: step 4/9. The polypeptide is 1-(5-phosphoribosyl)-5-[(5-phosphoribosylamino)methylideneamino] imidazole-4-carboxamide isomerase (Lactococcus lactis subsp. cremoris (strain MG1363)).